We begin with the raw amino-acid sequence, 287 residues long: MGSLKDIDSRIKSTKKMNQITKAMNMVASSKLNKAQRNSNQFKPYMDKLQNAITAVAGQTTSNHPMLVERPVKKRGYLVISSDRGLAGAYNANILRKVLQDIQERGENPSDYKLLVLGKVGIDFFKNRSIEVEYALPDVPDQPTFKSIEPVTKKAIDLYENGDIDELNIYYNKFINVLESKPTAKRVLPLSKEDASSGLGQMSSYEFEPDKESILNIILPQYVEGLIYGTILNAKASEHAMRMTAMKNASDNASDLIDDLSLQYNRARQAAITQQITEIVGGATALE.

The protein belongs to the ATPase gamma chain family. As to quaternary structure, F-type ATPases have 2 components, CF(1) - the catalytic core - and CF(0) - the membrane proton channel. CF(1) has five subunits: alpha(3), beta(3), gamma(1), delta(1), epsilon(1). CF(0) has three main subunits: a, b and c.

The protein resides in the cell membrane. In terms of biological role, produces ATP from ADP in the presence of a proton gradient across the membrane. The gamma chain is believed to be important in regulating ATPase activity and the flow of protons through the CF(0) complex. This Staphylococcus carnosus (strain TM300) protein is ATP synthase gamma chain.